The chain runs to 290 residues: 33 kDa chaperonin (290 aa).

Cystine bridges form between Cys-235–Cys-237 and Cys-268–Cys-271.

This sequence belongs to the HSP33 family. Under oxidizing conditions two disulfide bonds are formed involving the reactive cysteines. Under reducing conditions zinc is bound to the reactive cysteines and the protein is inactive.

It localises to the cytoplasm. In terms of biological role, redox regulated molecular chaperone. Protects both thermally unfolding and oxidatively damaged proteins from irreversible aggregation. Plays an important role in the bacterial defense system toward oxidative stress. The polypeptide is 33 kDa chaperonin (Streptococcus pneumoniae (strain CGSP14)).